Consider the following 237-residue polypeptide: 2-C-methyl-D-erythritol 4-phosphate cytidylyltransferase (237 aa).

Belongs to the IspD/TarI cytidylyltransferase family. IspD subfamily.

The enzyme catalyses 2-C-methyl-D-erythritol 4-phosphate + CTP + H(+) = 4-CDP-2-C-methyl-D-erythritol + diphosphate. It functions in the pathway isoprenoid biosynthesis; isopentenyl diphosphate biosynthesis via DXP pathway; isopentenyl diphosphate from 1-deoxy-D-xylulose 5-phosphate: step 2/6. Catalyzes the formation of 4-diphosphocytidyl-2-C-methyl-D-erythritol from CTP and 2-C-methyl-D-erythritol 4-phosphate (MEP). The chain is 2-C-methyl-D-erythritol 4-phosphate cytidylyltransferase from Vibrio vulnificus (strain YJ016).